A 473-amino-acid chain; its full sequence is Photosystem II CP43 reaction center protein (473 aa).

Positions 1-14 are excised as a propeptide; the sequence is MKTLYSLRRYYPVE. Residue threonine 15 is modified to N-acetylthreonine. Position 15 is a phosphothreonine (threonine 15). The next 5 helical transmembrane spans lie at 69–93, 134–155, 178–200, 255–275, and 291–312; these read LFEV…PHLA, LIGP…KDKN, KASF…REIT, KPFA…LSYS, and WFNN…ASQA. Glutamate 367 serves as a coordination point for [CaMn4O5] cluster. The chain crosses the membrane as a helical span at residues 447–471; it reads RARAAAAGFEKGIDRDSEPVLSMTP.

Belongs to the PsbB/PsbC family. PsbC subfamily. PSII is composed of 1 copy each of membrane proteins PsbA, PsbB, PsbC, PsbD, PsbE, PsbF, PsbH, PsbI, PsbJ, PsbK, PsbL, PsbM, PsbT, PsbX, PsbY, PsbZ, Psb30/Ycf12, at least 3 peripheral proteins of the oxygen-evolving complex and a large number of cofactors. It forms dimeric complexes. It depends on Binds multiple chlorophylls and provides some of the ligands for the Ca-4Mn-5O cluster of the oxygen-evolving complex. It may also provide a ligand for a Cl- that is required for oxygen evolution. PSII binds additional chlorophylls, carotenoids and specific lipids. as a cofactor.

The protein localises to the plastid. Its subcellular location is the chloroplast thylakoid membrane. Its function is as follows. One of the components of the core complex of photosystem II (PSII). It binds chlorophyll and helps catalyze the primary light-induced photochemical processes of PSII. PSII is a light-driven water:plastoquinone oxidoreductase, using light energy to abstract electrons from H(2)O, generating O(2) and a proton gradient subsequently used for ATP formation. The polypeptide is Photosystem II CP43 reaction center protein (Anthoceros angustus (Hornwort)).